A 660-amino-acid polypeptide reads, in one-letter code: Phosphatidylinositol-3-phosphate phosphatase MTMR7 (660 aa).

One can recognise a Myotubularin phosphatase domain in the interval 126–504 (GWVLIDLSEE…FMYKFWSGMY (379 aa)). A 1,2-diacyl-sn-glycero-3-phospho-(1D-myo-inositol-3-phosphate) contacts are provided by Asn-250, Asn-275, and Ile-276. Cys-338 functions as the Phosphocysteine intermediate in the catalytic mechanism. Positions 339, 340, 341, 342, 343, 344, and 384 each coordinate a 1,2-diacyl-sn-glycero-3-phospho-(1D-myo-inositol-3-phosphate). A coiled-coil region spans residues 514-558 (RQSVTDYLMAVKEETQQLEEELEALEERLEKIQKVQLNCTKVKSK). The segment at 554 to 660 (KVKSKQSEPS…DSDEAVFLTA (107 aa)) is disordered. Positions 566 to 596 (SGFSTSDNSIANTPQDYSGNMKSFPSRSPSQ) are enriched in polar residues. Thr-578 is modified (phosphothreonine). Basic and acidic residues predominate over residues 641–653 (APSEDSGKDRDSD).

Belongs to the protein-tyrosine phosphatase family. Non-receptor class myotubularin subfamily. As to quaternary structure, heterodimer (via C-terminus) with MTMR9 (via coiled coil domain); the interaction enhances MTMR7 catalytic activity. Does not homodimerize. Interacts with RAB1B (in GDP-bound form).

Its subcellular location is the cytoplasm. It localises to the endomembrane system. The enzyme catalyses a 1,2-diacyl-sn-glycero-3-phospho-(1D-myo-inositol-3-phosphate) + H2O = a 1,2-diacyl-sn-glycero-3-phospho-(1D-myo-inositol) + phosphate. It catalyses the reaction 1D-myo-inositol 1,3-bisphosphate + H2O = 1D-myo-inositol 1-phosphate + phosphate. Interaction with MTMR9 increases phosphatase activity. Functionally, lipid phosphatase that specifically dephosphorylates the D-3 position of phosphatidylinositol 3-phosphate (PtdIns(3)P) and inositol 1,3-bisphosphate (Ins(1,3)P2). The protein is Phosphatidylinositol-3-phosphate phosphatase MTMR7 of Pongo abelii (Sumatran orangutan).